The sequence spans 107 residues: UPF0122 protein BLi01817/BL02321 (107 aa).

It belongs to the UPF0122 family.

Its function is as follows. Might take part in the signal recognition particle (SRP) pathway. This is inferred from the conservation of its genetic proximity to ftsY/ffh. May be a regulatory protein. This chain is UPF0122 protein BLi01817/BL02321, found in Bacillus licheniformis (strain ATCC 14580 / DSM 13 / JCM 2505 / CCUG 7422 / NBRC 12200 / NCIMB 9375 / NCTC 10341 / NRRL NRS-1264 / Gibson 46).